Reading from the N-terminus, the 273-residue chain is MAPQQQPSSIPTPYEDLLREILETGTPKGDRTGTGTTSLFGRQIRYDLSAGFPLITTKSVHVKSVVGELLWFLRGDSNVRWLQENGIRIWNEWADENGDLGPVYGVQWRSWPTPNGQHIDQIAGALETLQTNPDSRRNIVSAWNVSELDNMALPPCHLLFQLYVANGKLSCQLYQRSADMFLGVPFNIASYSLLTHMFAQQAGLEVGEFIWTGGDCHIYDNHVEQVKLQLSRDARPYPQLKLNKAADMFSYDFSDIEFTGYDPHPVIKAKVAV.

Arg-31 contacts dUMP. Residue His-61 coordinates (6R)-5,10-methylene-5,6,7,8-tetrahydrofolate. 136–137 (RR) lines the dUMP pocket. The active-site Nucleophile is Cys-156. DUMP contacts are provided by residues 176-179 (RSAD), Asn-187, and 217-219 (HIY). (6R)-5,10-methylene-5,6,7,8-tetrahydrofolate is bound at residue Asp-179. Residue Ala-272 participates in (6R)-5,10-methylene-5,6,7,8-tetrahydrofolate binding.

It belongs to the thymidylate synthase family. Bacterial-type ThyA subfamily. Homodimer.

Its subcellular location is the cytoplasm. The catalysed reaction is dUMP + (6R)-5,10-methylene-5,6,7,8-tetrahydrofolate = 7,8-dihydrofolate + dTMP. It functions in the pathway pyrimidine metabolism; dTTP biosynthesis. Catalyzes the reductive methylation of 2'-deoxyuridine-5'-monophosphate (dUMP) to 2'-deoxythymidine-5'-monophosphate (dTMP) while utilizing 5,10-methylenetetrahydrofolate (mTHF) as the methyl donor and reductant in the reaction, yielding dihydrofolate (DHF) as a by-product. This enzymatic reaction provides an intracellular de novo source of dTMP, an essential precursor for DNA biosynthesis. This chain is Thymidylate synthase, found in Corynebacterium jeikeium (strain K411).